A 485-amino-acid polypeptide reads, in one-letter code: NADH-quinone oxidoreductase subunit N (485 aa).

The next 14 membrane-spanning stretches (helical) occupy residues 8–28 (LIAL…MLCI), 35–55 (FINS…LWFV), 75–95 (FYTG…YAWL), 105–125 (FYLL…ANHL), 127–147 (ALFL…GYAF), 159–179 (YTLL…LVYA), 203–223 (LLAG…LVPF), 235–255 (PVPV…AVVM), 271–291 (LVLA…ALSQ), 303–323 (IAHL…TLAL), 326–346 (VGVY…VVSL), 371–393 (LLSS…LGFI), 406–426 (HLGW…FYYL), and 449–469 (ALTA…LLGL).

It belongs to the complex I subunit 2 family. NDH-1 is composed of 13 different subunits. Subunits NuoA, H, J, K, L, M, N constitute the membrane sector of the complex.

The protein resides in the cell inner membrane. The catalysed reaction is a quinone + NADH + 5 H(+)(in) = a quinol + NAD(+) + 4 H(+)(out). NDH-1 shuttles electrons from NADH, via FMN and iron-sulfur (Fe-S) centers, to quinones in the respiratory chain. The immediate electron acceptor for the enzyme in this species is believed to be ubiquinone. Couples the redox reaction to proton translocation (for every two electrons transferred, four hydrogen ions are translocated across the cytoplasmic membrane), and thus conserves the redox energy in a proton gradient. This chain is NADH-quinone oxidoreductase subunit N, found in Sodalis glossinidius (strain morsitans).